The following is a 190-amino-acid chain: Lipid A acyltransferase PagP (190 aa).

The signal sequence occupies residues 1-18 (MKRLISCLTIICALNASA). Catalysis depends on residues histidine 60, aspartate 103, and serine 104.

The protein belongs to the lipid A palmitoyltransferase family. Homodimer.

It is found in the cell outer membrane. It catalyses the reaction a lipid A + a 1,2-diacyl-sn-glycero-3-phosphocholine = a hepta-acyl lipid A + a 2-acyl-sn-glycero-3-phosphocholine. The enzyme catalyses a lipid IVA + a 1,2-diacyl-sn-glycero-3-phosphocholine = a lipid IVB + a 2-acyl-sn-glycero-3-phosphocholine. It carries out the reaction a lipid IIA + a 1,2-diacyl-sn-glycero-3-phosphocholine = a lipid IIB + a 2-acyl-sn-glycero-3-phosphocholine. Its function is as follows. Transfers a fatty acid residue from the sn-1 position of a phospholipid to the N-linked hydroxyfatty acid chain on the proximal unit of lipid A or its precursors. In Legionella pneumophila serogroup 1 (strain 2300/99 Alcoy), this protein is Lipid A acyltransferase PagP.